Consider the following 345-residue polypeptide: NADPH dehydrogenase (345 aa).

An FMN-binding site is contributed by S23–C26. Y28 is a binding site for substrate. FMN is bound by residues A60 and Q102. H164 to H167 contacts substrate. FMN is bound by residues R215 and G307 to R308.

It belongs to the NADH:flavin oxidoreductase/NADH oxidase family. NamA subfamily. Homotetramer. FMN serves as cofactor.

The enzyme catalyses A + NADPH + H(+) = AH2 + NADP(+). Catalyzes the reduction of the double bond of an array of alpha,beta-unsaturated aldehydes and ketones. It also reduces the nitro group of nitroester and nitroaromatic compounds. It could have a role in detoxification processes. This Bacillus cereus (strain AH187) protein is NADPH dehydrogenase.